A 172-amino-acid polypeptide reads, in one-letter code: Ribosome maturation factor RimM (172 aa).

The PRC barrel domain maps to 97–170 (DDEYYYDEII…LITIDVLEGL (74 aa)).

This sequence belongs to the RimM family. As to quaternary structure, binds ribosomal protein uS19.

It is found in the cytoplasm. An accessory protein needed during the final step in the assembly of 30S ribosomal subunit, possibly for assembly of the head region. Essential for efficient processing of 16S rRNA. May be needed both before and after RbfA during the maturation of 16S rRNA. It has affinity for free ribosomal 30S subunits but not for 70S ribosomes. The protein is Ribosome maturation factor RimM of Leuconostoc citreum (strain KM20).